Here is a 404-residue protein sequence, read N- to C-terminus: MAKRRSWFGWMKRLFICEAKARAEKKPRRLRWVFKRLKLRPQLATCGQETRTLNEATQDQRKHAMNVAIATAAAAEAAVAAAKAAAEVVRMAGNAFTSQHFVKKLAPNVAAIKIQSAFRASLARKALRALKALVRLQAIVRGRAVRRKVSALLKSSHSNKASTSNIIQRQTERKHWSNTKSEIKEELQVSNHSLCNSKVKCNGWDSSALTKEDIKAIWLRKQEGVIKRDRMLKYSRSQRERRSPHMLVESLYAKDMGMRSCRLEHWGESKSAKSINSFLIPSEMLVPTKVKLRSLQRQDSGDGQDSPFSFPRRSFSRLEQSILEDESWFQRSNGFQPYMSVTESAREKMRSLSTPRQRVGIMDSLFDNYKKDGDKVSLWSTFVCENSKINNAKKSSLTTYQHNC.

The segment at 8-25 (FGWMKRLFICEAKARAEK) is calmodulin-binding. A Nuclear localization signal 1 motif is present at residues 11–18 (MKRLFICE). 2 consecutive IQ domains span residues 108–135 (NVAA…ALVR) and 136–158 (LQAI…SSHS). The Nuclear localization signal 2 motif lies at 226–233 (IKRDRMLK).

The protein belongs to the IQD family. As to quaternary structure, binds to multiple calmodulin (CaM) in the presence of Ca(2+) and CaM-like proteins.

It localises to the nucleus. Its subcellular location is the cell membrane. May be involved in cooperative interactions with calmodulins or calmodulin-like proteins. Recruits calmodulin proteins to microtubules, thus being a potential scaffold in cellular signaling and trafficking. May associate with nucleic acids and regulate gene expression at the transcriptional or post-transcriptional level. This is Protein IQ-DOMAIN 12 from Arabidopsis thaliana (Mouse-ear cress).